The primary structure comprises 212 residues: Imidazole glycerol phosphate synthase subunit HisH (212 aa).

One can recognise a Glutamine amidotransferase type-1 domain in the interval 1–211 (MIGVIDYGMG…TKMAAEQQVK (211 aa)). The active-site Nucleophile is the cysteine 79. Catalysis depends on residues histidine 186 and glutamate 188.

In terms of assembly, heterodimer of HisH and HisF.

It is found in the cytoplasm. The catalysed reaction is 5-[(5-phospho-1-deoxy-D-ribulos-1-ylimino)methylamino]-1-(5-phospho-beta-D-ribosyl)imidazole-4-carboxamide + L-glutamine = D-erythro-1-(imidazol-4-yl)glycerol 3-phosphate + 5-amino-1-(5-phospho-beta-D-ribosyl)imidazole-4-carboxamide + L-glutamate + H(+). It catalyses the reaction L-glutamine + H2O = L-glutamate + NH4(+). It participates in amino-acid biosynthesis; L-histidine biosynthesis; L-histidine from 5-phospho-alpha-D-ribose 1-diphosphate: step 5/9. Its function is as follows. IGPS catalyzes the conversion of PRFAR and glutamine to IGP, AICAR and glutamate. The HisH subunit catalyzes the hydrolysis of glutamine to glutamate and ammonia as part of the synthesis of IGP and AICAR. The resulting ammonia molecule is channeled to the active site of HisF. This chain is Imidazole glycerol phosphate synthase subunit HisH, found in Bacillus velezensis (strain DSM 23117 / BGSC 10A6 / LMG 26770 / FZB42) (Bacillus amyloliquefaciens subsp. plantarum).